The following is a 342-amino-acid chain: SWR1-complex protein 5 (342 aa).

3 disordered regions span residues methionine 1 to isoleucine 126, proline 142 to serine 178, and leucine 214 to arginine 238. 2 stretches are compositionally biased toward acidic residues: residues leucine 8–phenylalanine 20 and isoleucine 33–glutamate 43. A compositionally biased stretch (basic residues) spans glycine 78–threonine 87. A BCNT-C domain is found at asparagine 260–lysine 341.

It belongs to the SWC5 family. As to quaternary structure, component of the SWR1 chromatin remodeling complex.

The protein localises to the nucleus. In terms of biological role, component of the SWR1 complex which mediates the ATP-dependent exchange of histone H2A for the H2A variant H2A.Z leading to transcriptional regulation of selected genes by chromatin remodeling. Involved in chromosome stability. This chain is SWR1-complex protein 5 (crc-2), found in Neurospora crassa (strain ATCC 24698 / 74-OR23-1A / CBS 708.71 / DSM 1257 / FGSC 987).